A 75-amino-acid chain; its full sequence is Small ribosomal subunit protein bS18 (75 aa).

It belongs to the bacterial ribosomal protein bS18 family. Part of the 30S ribosomal subunit. Forms a tight heterodimer with protein bS6.

Its function is as follows. Binds as a heterodimer with protein bS6 to the central domain of the 16S rRNA, where it helps stabilize the platform of the 30S subunit. The polypeptide is Small ribosomal subunit protein bS18 (Mycoplasma mycoides subsp. mycoides SC (strain CCUG 32753 / NCTC 10114 / PG1)).